A 493-amino-acid chain; its full sequence is MVGFEDHIAAITRNYQVNPRLDYRTVTAVNGPLVILDNIRGPKFSEIVTLTLGDGTQRKGQVLEIQGKRAVVQVFEGTIGIDAKHTRCEFSGDILKMPVSEDSLGRIFNGSGKPVDKGPNVLAEEYLDIQGQPINPSVRVYPQEMIQTGISAIDTMNSIARGQKIPIFSAAGLPHNEIAAQICRQAGLVKKSGKGVIDDHEDNFAIVFAAMGVNMETASFFKRDFEESGSMDRTALFLNLADHPTIERIITPRLALTTAEYLAYQCEKHVLVLLTDMSSYADALREVSAAREEVPGRRGYPGYMYTDLSTIYERAGRIQGRNGSITQIPILTMPNDDITHPIPDLTGYITEGQIFIDRQINNRQIYPPINVLPSLSRLMKSAIGDDMTRGDHSEVSNQMYANYAIGKDVQAMKAVVGEEALSSEDKLYLEFLERFESSFVGQNHYENRDIFNSLDLGWSLLRTFPSNLLKRITEKTIKQYYSRSSKGTVDSTN.

Belongs to the ATPase alpha/beta chains family. As to quaternary structure, V-ATPase is a heteromultimeric enzyme composed of a peripheral catalytic V1 complex (main components: subunits A, B, C, D, E, and F) attached to an integral membrane V0 proton pore complex (main component: the proteolipid protein).

The protein resides in the cytoplasmic vesicle membrane. Its subcellular location is the endosome membrane. The protein localises to the contractile vacuole membrane. Functionally, vacuolar ATPase is responsible for acidifying a variety of intracellular compartments in eukaryotic cells. The B subunit is non-catalytic but combines with other subunits to form the catalytic complex. V-ATPase is responsible for energizing electrophoretic K(+)/2H(+) antiport by generating a transmembrane voltage of more than 200 mV. The sequence is that of V-type proton ATPase subunit B (vatB) from Dictyostelium discoideum (Social amoeba).